The chain runs to 229 residues: MPLNEVSGNAFPRTVLFDLDGTLLDSAPDMLATANAMLAARGRAPITLMQLRPVISRGTFRIIAVAFPELDAAAIQGLIPEFLQRYEALIGSVSKPFDGVEMMLHALECAGTVWGIVTNKPEFLARLILPLLGWTSRCAVLIGGDTLAERKPHPLPLLTAAERIGVMPTDCVYVGDDVRDIQAARAAGMPSMVALWGYRSHEDNPMTWQADTLVEQPHLLSRPDVWPST.

Asp18 functions as the Nucleophile in the catalytic mechanism. Asp18, Asp20, and Asp176 together coordinate Mg(2+).

The protein belongs to the HAD-like hydrolase superfamily. CbbY/CbbZ/Gph/YieH family. Requires Mg(2+) as cofactor.

The enzyme catalyses 2-phosphoglycolate + H2O = glycolate + phosphate. The protein operates within organic acid metabolism; glycolate biosynthesis; glycolate from 2-phosphoglycolate: step 1/1. In terms of biological role, specifically catalyzes the dephosphorylation of 2-phosphoglycolate. Is involved in the dissimilation of the intracellular 2-phosphoglycolate formed during the DNA repair of 3'-phosphoglycolate ends, a major class of DNA lesions induced by oxidative stress. In Xylella fastidiosa (strain Temecula1 / ATCC 700964), this protein is Phosphoglycolate phosphatase.